Reading from the N-terminus, the 113-residue chain is U11-theraphotoxin-Hhn1f (113 aa).

An N-terminal signal peptide occupies residues 1–21; that stretch reads MNTVRVTFLLVFVLAVSLGQA. A propeptide spanning residues 22–74 is cleaved from the precursor; the sequence is DKDENRMEMQEKTEQGKSYLDFAENLLLQKLEELEAKLLEEDSEESRNSRQKR. The segment at 61-83 is disordered; it reads EEDSEESRNSRQKRCIGEGVPCD. Cystine bridges form between Cys-75–Cys-90, Cys-82–Cys-95, and Cys-89–Cys-110.

It belongs to the neurotoxin 14 (magi-1) family. 01 (HNTX-16) subfamily. Expressed by the venom gland.

Its subcellular location is the secreted. Its function is as follows. Probable ion channel inhibitor. In Cyriopagopus hainanus (Chinese bird spider), this protein is U11-theraphotoxin-Hhn1f.